The following is a 310-amino-acid chain: HPr kinase/phosphorylase (310 aa).

Residue His-138 participates in Mg(2+) binding. 153 to 160 is an ATP binding site; sequence GKSGVGKS. Lys-159 is a catalytic residue. A Mg(2+)-binding site is contributed by Ser-160. Asp-177 (proton acceptor; for phosphorylation activity. Proton donor; for dephosphorylation activity) is an active-site residue. Residues 201-210 are important for the catalytic mechanism of both phosphorylation and dephosphorylation; it reads LEIRGLGIIN. Residue Glu-202 coordinates Mg(2+). Arg-243 is an active-site residue. Residues 264-269 form an important for the catalytic mechanism of dephosphorylation region; sequence PVRPGR.

Belongs to the HPrK/P family. Homohexamer. The cofactor is Mg(2+). Ca(2+) is required as a cofactor.

The enzyme catalyses [HPr protein]-L-serine + ATP = [HPr protein]-O-phospho-L-serine + ADP + H(+). It catalyses the reaction [HPr protein]-O-phospho-L-serine + phosphate + H(+) = [HPr protein]-L-serine + diphosphate. Is active as a kinase only at high ATP concentrations or at low ATP concentrations in the presence of the allosteric activator fructose 1,6-bisphosphate (FBP). The pyrophosphate-dependent HPr phosphorylation is not stimulated by FBP. Kinase activity is inhibited by inorganic phosphate (Pi). Dephosphorylation of HPr(Ser-P) by B.subtilis HPrK/P becomes prevalent when the concentration of Pi increases. Thus, the kinase activity may prevail under conditions of good nutrient supply, whereas the phosphorylase activity is dominant if carbon and energy sources become limiting. In terms of biological role, catalyzes the ATP- as well as the pyrophosphate-dependent phosphorylation of 'Ser-45' in HPr, a phosphocarrier protein of the phosphoenolpyruvate-dependent sugar phosphotransferase system (PTS). HprK/P also catalyzes the pyrophosphate-producing, inorganic phosphate-dependent dephosphorylation (phosphorolysis) of seryl-phosphorylated HPr (P-Ser-HPr). The two antagonistic activities of HprK/P are regulated by several intracellular metabolites, which change their concentration in response to the absence or presence of rapidly metabolisable carbon sources (glucose, fructose, etc.) in the growth medium. Also phosphorylates/dephosphorylates the HPr-like catabolite repression protein crh on 'Ser-46'. Therefore, by controlling the phosphorylation state of HPr and crh, HPrK/P is a sensor enzyme that plays a major role in the regulation of carbon metabolism and sugar transport: it mediates carbon catabolite repression (CCR), and regulates PTS-catalyzed carbohydrate uptake and inducer exclusion. The polypeptide is HPr kinase/phosphorylase (hprK) (Bacillus subtilis (strain 168)).